The primary structure comprises 459 residues: Elongation factor 1-alpha 2 (459 aa).

The tr-type G domain occupies 5–242 (KTHINIVVIG…DCIIPPQRPT (238 aa)). The segment at 14–21 (GHVDSGKS) is G1. The segment at 70–74 (GITID) is G2. A G3 region spans residues 91–94 (DAPG). Positions 153 to 156 (NKMD) are G4. The interval 194–196 (SGF) is G5. 2 positions are modified to 5-glutamyl glycerylphosphorylethanolamine: E301 and E374.

This sequence belongs to the TRAFAC class translation factor GTPase superfamily. Classic translation factor GTPase family. EF-Tu/EF-1A subfamily.

It localises to the cytoplasm. In terms of biological role, this protein promotes the GTP-dependent binding of aminoacyl-tRNA to the A-site of ribosomes during protein biosynthesis. The protein is Elongation factor 1-alpha 2 (eft-2) of Oscheius tipulae.